The chain runs to 212 residues: Large ribosomal subunit protein uL1 (212 aa).

This sequence belongs to the universal ribosomal protein uL1 family. In terms of assembly, part of the 50S ribosomal subunit.

In terms of biological role, binds directly to 23S rRNA. Probably involved in E site tRNA release. Its function is as follows. Protein L1 is also a translational repressor protein, it controls the translation of its operon by binding to its mRNA. The chain is Large ribosomal subunit protein uL1 from Haloarcula marismortui (strain ATCC 43049 / DSM 3752 / JCM 8966 / VKM B-1809) (Halobacterium marismortui).